The sequence spans 665 residues: Potassium-transporting ATPase ATP-binding subunit (665 aa).

A run of 4 helical transmembrane segments spans residues 28-48, 56-76, 207-227, and 244-264; these read MFLTEMSLFLSVFIYAFPGFF, YLQFYLAVVILLFLTVFFSSM, IALTVFLSGLTLIFLIITASI, and IVLLIALIPTTIGALLPAIGI. Aspartate 295 (4-aspartylphosphate intermediate) is an active-site residue. ATP is bound by residues aspartate 332, glutamate 336, 364–371, and lysine 382; that span reads FSSETKYS. The Mg(2+) site is built by aspartate 501 and aspartate 505. 3 consecutive transmembrane segments (helical) span residues 570-590, 596-616, and 644-664; these read YFVIIPAIFYMFPSLSMVNVL, IVAVTSALIFNTIIIVFLIPL, and VVVPFIAIKLIYMLLVALGVV.

The protein belongs to the cation transport ATPase (P-type) (TC 3.A.3) family. Type IA subfamily. As to quaternary structure, the system is composed of three essential subunits: KdpA, KdpB and KdpC.

The protein localises to the cell membrane. It catalyses the reaction K(+)(out) + ATP + H2O = K(+)(in) + ADP + phosphate + H(+). Functionally, part of the high-affinity ATP-driven potassium transport (or Kdp) system, which catalyzes the hydrolysis of ATP coupled with the electrogenic transport of potassium into the cytoplasm. This subunit is responsible for energy coupling to the transport system and for the release of the potassium ions to the cytoplasm. In Thermoplasma acidophilum (strain ATCC 25905 / DSM 1728 / JCM 9062 / NBRC 15155 / AMRC-C165), this protein is Potassium-transporting ATPase ATP-binding subunit.